A 269-amino-acid polypeptide reads, in one-letter code: Putative carbamate hydrolase RutD (269 aa).

In terms of domain architecture, AB hydrolase-1 spans Val26 to Asn144.

The protein belongs to the AB hydrolase superfamily. Hydrolase RutD family.

The enzyme catalyses carbamate + 2 H(+) = NH4(+) + CO2. Functionally, involved in pyrimidine catabolism. May facilitate the hydrolysis of carbamate, a reaction that can also occur spontaneously. This is Putative carbamate hydrolase RutD from Caulobacter vibrioides (strain ATCC 19089 / CIP 103742 / CB 15) (Caulobacter crescentus).